Here is a 156-residue protein sequence, read N- to C-terminus: SsrA-binding protein (156 aa).

This sequence belongs to the SmpB family.

The protein localises to the cytoplasm. Its function is as follows. Required for rescue of stalled ribosomes mediated by trans-translation. Binds to transfer-messenger RNA (tmRNA), required for stable association of tmRNA with ribosomes. tmRNA and SmpB together mimic tRNA shape, replacing the anticodon stem-loop with SmpB. tmRNA is encoded by the ssrA gene; the 2 termini fold to resemble tRNA(Ala) and it encodes a 'tag peptide', a short internal open reading frame. During trans-translation Ala-aminoacylated tmRNA acts like a tRNA, entering the A-site of stalled ribosomes, displacing the stalled mRNA. The ribosome then switches to translate the ORF on the tmRNA; the nascent peptide is terminated with the 'tag peptide' encoded by the tmRNA and targeted for degradation. The ribosome is freed to recommence translation, which seems to be the essential function of trans-translation. This is SsrA-binding protein from Staphylococcus carnosus (strain TM300).